Reading from the N-terminus, the 444-residue chain is Homogentisate 1,2-dioxygenase (444 aa).

Residues 92 to 111 (GDSADVPPTPPNQLRWDPLP) are disordered. Catalysis depends on His-298, which acts as the Proton acceptor. Residues His-341 and Glu-347 each contribute to the Fe cation site. Homogentisate-binding residues include Tyr-356 and His-377. Position 377 (His-377) interacts with Fe cation.

The protein belongs to the homogentisate dioxygenase family. As to quaternary structure, hexamer; dimer of trimers. Fe cation serves as cofactor.

It carries out the reaction homogentisate + O2 = 4-maleylacetoacetate + H(+). Its pathway is amino-acid degradation; L-phenylalanine degradation; acetoacetate and fumarate from L-phenylalanine: step 4/6. In terms of biological role, involved in the catabolism of homogentisate (2,5-dihydroxyphenylacetate or 2,5-OH-PhAc), a central intermediate in the degradation of phenylalanine and tyrosine. Catalyzes the oxidative ring cleavage of the aromatic ring of homogentisate to yield maleylacetoacetate. The sequence is that of Homogentisate 1,2-dioxygenase from Burkholderia vietnamiensis (strain G4 / LMG 22486) (Burkholderia cepacia (strain R1808)).